The following is a 303-amino-acid chain: Methionyl-tRNA formyltransferase (303 aa).

(6S)-5,6,7,8-tetrahydrofolate is bound at residue 111-114 (SLLP).

It belongs to the Fmt family.

The enzyme catalyses L-methionyl-tRNA(fMet) + (6R)-10-formyltetrahydrofolate = N-formyl-L-methionyl-tRNA(fMet) + (6S)-5,6,7,8-tetrahydrofolate + H(+). In terms of biological role, attaches a formyl group to the free amino group of methionyl-tRNA(fMet). The formyl group appears to play a dual role in the initiator identity of N-formylmethionyl-tRNA by promoting its recognition by IF2 and preventing the misappropriation of this tRNA by the elongation apparatus. This Ehrlichia chaffeensis (strain ATCC CRL-10679 / Arkansas) protein is Methionyl-tRNA formyltransferase.